Consider the following 151-residue polypeptide: Leukocyte cell-derived chemotaxin-2 (151 aa).

Residues 1-18 (MIPTTILISAALLSSALA) form the signal peptide. Cystine bridges form between C25–C60, C36–C41, and C99–C142. The Zn(2+) site is built by H53, D57, and H138.

Belongs to the LECT2/MIM-1 family. In terms of tissue distribution, highly expressed in liver and weakly in testis. Not expressed in heart, brain, spleen, lung, skeletal muscle and kidney.

It localises to the secreted. In terms of biological role, has a neutrophil chemotactic activity. Also a positive regulator of chondrocyte proliferation. The polypeptide is Leukocyte cell-derived chemotaxin-2 (Lect2) (Mus musculus (Mouse)).